The primary structure comprises 160 residues: S-ribosylhomocysteine lyase (160 aa).

3 residues coordinate Fe cation: H57, H61, and C127.

The protein belongs to the LuxS family. As to quaternary structure, homodimer. It depends on Fe cation as a cofactor.

The enzyme catalyses S-(5-deoxy-D-ribos-5-yl)-L-homocysteine = (S)-4,5-dihydroxypentane-2,3-dione + L-homocysteine. Its function is as follows. Involved in the synthesis of autoinducer 2 (AI-2) which is secreted by bacteria and is used to communicate both the cell density and the metabolic potential of the environment. The regulation of gene expression in response to changes in cell density is called quorum sensing. Catalyzes the transformation of S-ribosylhomocysteine (RHC) to homocysteine (HC) and 4,5-dihydroxy-2,3-pentadione (DPD). This Streptococcus pneumoniae (strain CGSP14) protein is S-ribosylhomocysteine lyase.